A 289-amino-acid polypeptide reads, in one-letter code: Acetyl-coenzyme A carboxylase carboxyl transferase subunit beta (289 aa).

The CoA carboxyltransferase N-terminal domain maps to 28-289 (VMTKCPECKK…QGGEMAVWQS (262 aa)). Zn(2+) is bound by residues cysteine 32, cysteine 35, cysteine 51, and cysteine 54. A C4-type zinc finger spans residues 32–54 (CPECKKIMYTKELLKNLKVCVNC).

This sequence belongs to the AccD/PCCB family. Acetyl-CoA carboxylase is a heterohexamer composed of biotin carboxyl carrier protein (AccB), biotin carboxylase (AccC) and two subunits each of ACCase subunit alpha (AccA) and ACCase subunit beta (AccD). The cofactor is Zn(2+).

The protein resides in the cytoplasm. The catalysed reaction is N(6)-carboxybiotinyl-L-lysyl-[protein] + acetyl-CoA = N(6)-biotinyl-L-lysyl-[protein] + malonyl-CoA. The protein operates within lipid metabolism; malonyl-CoA biosynthesis; malonyl-CoA from acetyl-CoA: step 1/1. Its function is as follows. Component of the acetyl coenzyme A carboxylase (ACC) complex. Biotin carboxylase (BC) catalyzes the carboxylation of biotin on its carrier protein (BCCP) and then the CO(2) group is transferred by the transcarboxylase to acetyl-CoA to form malonyl-CoA. The sequence is that of Acetyl-coenzyme A carboxylase carboxyl transferase subunit beta from Bacillus cereus (strain ATCC 14579 / DSM 31 / CCUG 7414 / JCM 2152 / NBRC 15305 / NCIMB 9373 / NCTC 2599 / NRRL B-3711).